The primary structure comprises 312 residues: Porphobilinogen deaminase (312 aa).

Cys-241 is subject to S-(dipyrrolylmethanemethyl)cysteine.

The protein belongs to the HMBS family. In terms of assembly, monomer. It depends on dipyrromethane as a cofactor.

The catalysed reaction is 4 porphobilinogen + H2O = hydroxymethylbilane + 4 NH4(+). Its pathway is porphyrin-containing compound metabolism; protoporphyrin-IX biosynthesis; coproporphyrinogen-III from 5-aminolevulinate: step 2/4. In terms of biological role, tetrapolymerization of the monopyrrole PBG into the hydroxymethylbilane pre-uroporphyrinogen in several discrete steps. The protein is Porphobilinogen deaminase of Aliarcobacter butzleri (strain RM4018) (Arcobacter butzleri).